Here is a 696-residue protein sequence, read N- to C-terminus: Caprolactamase subunit alpha (696 aa).

It belongs to the HyuA family. The caprolactamase is a heterotetramer composed of two alpha subunits (CapA) and two beta subunits (CapB).

With respect to regulation, activity is dependent on the presence of ATP and bicarbonate. The requirement for bicarbonate may be related to allosteric activation through conformational effects, but it is also conceivable that carboxyphosphate is formed and acts as a mediator in caprolactam activation, forming carboxy- or phospholactim. Functionally, component of a caprolactamase involved in the degradation of caprolactam, an industrial compound mainly used in the production of Nylon 6. Catalyzes the ATP-dependent hydrolysis of the caprolactam ring to form 6-aminocaproic acid (6-ACA). The alpha subunit is responsible for ATP-dependent substrate phosphorylation. The enzyme cannot use 5-oxoproline. This Pseudomonas jessenii protein is Caprolactamase subunit alpha.